A 69-amino-acid polypeptide reads, in one-letter code: Probable cold shock protein y4cH (69 aa).

The CSD domain maps to 5 to 65 (GTVKWFNATK…DRKSGKMSAD (61 aa)).

Its subcellular location is the cytoplasm. The protein is Probable cold shock protein y4cH of Sinorhizobium fredii (strain NBRC 101917 / NGR234).